The chain runs to 162 residues: UPF0114 protein PSPA7_5214 (162 aa).

3 helical membrane-spanning segments follow: residues 15 to 35 (LLAP…IKFF), 53 to 73 (LILV…LVMV), and 136 to 156 (LMWY…MGYL).

Belongs to the UPF0114 family.

It is found in the cell membrane. This chain is UPF0114 protein PSPA7_5214, found in Pseudomonas paraeruginosa (strain DSM 24068 / PA7) (Pseudomonas aeruginosa (strain PA7)).